A 194-amino-acid chain; its full sequence is Phosphoheptose isomerase (194 aa).

Residues 37 to 194 enclose the SIS domain; it reads IAKSFKNKNK…IIEKEMKKIN (158 aa). Position 52–54 (52–54) interacts with substrate; it reads NGG. Zn(2+)-binding residues include H61 and E65. Substrate contacts are provided by residues E65, 93 to 94, 119 to 121, S124, and Q172; these read ND and STS. Zn(2+) contacts are provided by Q172 and H180.

It belongs to the SIS family. GmhA subfamily. In terms of assembly, homotetramer. Zn(2+) serves as cofactor.

Its subcellular location is the cytoplasm. It catalyses the reaction 2 D-sedoheptulose 7-phosphate = D-glycero-alpha-D-manno-heptose 7-phosphate + D-glycero-beta-D-manno-heptose 7-phosphate. Its pathway is carbohydrate biosynthesis; D-glycero-D-manno-heptose 7-phosphate biosynthesis; D-glycero-alpha-D-manno-heptose 7-phosphate and D-glycero-beta-D-manno-heptose 7-phosphate from sedoheptulose 7-phosphate: step 1/1. In terms of biological role, catalyzes the isomerization of sedoheptulose 7-phosphate in D-glycero-D-manno-heptose 7-phosphate. The protein is Phosphoheptose isomerase of Buchnera aphidicola subsp. Schizaphis graminum (strain Sg).